A 341-amino-acid chain; its full sequence is MESFASLAGGGSSSTTARLPELISPENPDHISPPPLLYQLLAGPESSARQHGHDGHHHGGGGGEAAAAAVQGQVSPAGAEAAVKAEIMSHPQYSALLAAYLGCKKVGAPPDVLTKLTAVPAAQQLDEADGHPRRRHEPQRDDDPDQLDQFMDAYCSMLTRYREELERPILEAAEFFSRVETQLDSLAESNCEGTGSSEEEQDPSDKQLKHQLLRKYGGSLGDLRQVFSKRTKKGKLPKEARQKLLHWWELHYKWPYPSEMEKMTLAQTTGLDQKQINNWFINQRKRHWKPTPVAGTAFPTMEAAGGGFRHSGHGGGLAAAAALPLYMGRPFVVDGMYRLGS.

The segment covering methionine 1–alanine 17 has biased composition (low complexity). Disordered stretches follow at residues methionine 1–glycine 72, alanine 121–aspartate 148, and alanine 187–glutamine 207. A compositionally biased stretch (polar residues) spans alanine 187 to serine 196. The ELK domain occupies glutamine 207 to phenylalanine 227. The segment at residues serine 228–threonine 291 is a DNA-binding region (homeobox; TALE-type).

Belongs to the TALE/KNOX homeobox family.

Its subcellular location is the nucleus. In terms of biological role, probable transcription factor that may be involved in shoot formation during embryogenesis. The polypeptide is Homeobox protein knotted-1-like 8 (OSH43) (Oryza sativa subsp. japonica (Rice)).